We begin with the raw amino-acid sequence, 151 residues long: Caveolin-3 (151 aa).

Residues 1-83 (MMAEERTDLE…RLLSTLLGVP (83 aa)) lie on the Cytoplasmic side of the membrane. Lys38 participates in a covalent cross-link: Glycyl lysine isopeptide (Lys-Gly) (interchain with G-Cter in SUMO3). Positions 64–114 (TFTVSKYWCYRLLSTLLGVPLALLWGFLFACISFCHIWAVVPCIKSYLIEI) are required for interaction with DAG1. An intramembrane region (helical) is located at residues 84-104 (LALLWGFLFACISFCHIWAVV). The Cytoplasmic portion of the chain corresponds to 105-151 (PCIKSYLIEIQCISHIYSLCIRTFCNPVFAALGQVCSNIKVMLRKEV).

The protein belongs to the caveolin family. As to quaternary structure, homooligomer. Interacts with DYSF. Interacts with DLG1 and KCNA5; forms a ternary complex. Interacts with DAG1 (via its C-terminal); the interaction prevents binding of DAG1 with DMD. Interacts with TRIM72. Interacts with MUSK; may regulate MUSK signaling. Interacts with POPDC1. Interacts with CAVIN1, CAVIN2 and CAVIN4. In terms of processing, sumoylation with SUMO3 by PIAS4 may reduce agonist-induced internalization and desensitization of adrenergic receptor ABRD2. In terms of tissue distribution, expressed specifically in skeletal muscle and heart.

It is found in the golgi apparatus membrane. The protein localises to the cell membrane. It localises to the membrane. The protein resides in the caveola. Its subcellular location is the sarcolemma. In terms of biological role, may act as a scaffolding protein within caveolar membranes. Interacts directly with G-protein alpha subunits and can functionally regulate their activity. May also regulate voltage-gated potassium channels. Plays a role in the sarcolemma repair mechanism of both skeletal muscle and cardiomyocytes that permits rapid resealing of membranes disrupted by mechanical stress. Mediates the recruitment of CAVIN2 and CAVIN3 proteins to the caveolae. The protein is Caveolin-3 (CAV3) of Sus scrofa (Pig).